Here is a 125-residue protein sequence, read N- to C-terminus: Holo-[acyl-carrier-protein] synthase (125 aa).

Residues aspartate 8 and glutamate 57 each coordinate Mg(2+).

The protein belongs to the P-Pant transferase superfamily. AcpS family. Requires Mg(2+) as cofactor.

Its subcellular location is the cytoplasm. It carries out the reaction apo-[ACP] + CoA = holo-[ACP] + adenosine 3',5'-bisphosphate + H(+). Functionally, transfers the 4'-phosphopantetheine moiety from coenzyme A to a Ser of acyl-carrier-protein. The sequence is that of Holo-[acyl-carrier-protein] synthase from Neisseria gonorrhoeae (strain ATCC 700825 / FA 1090).